A 250-amino-acid chain; its full sequence is MSDSAVATSASPVIAQAASGEKKVSTKKGSSTPESKKSTAAPPSHPPTQQMVDASIKNLKERGGSSLLAIKKYIGATYKCDAQKLAPFIKKYLKNAVANGNVIQTKGKGASGSFKLSASANKDAKPKASAVEKKTKKVNASAARATKSKSSTSTTKKAAGAADKKLSKSAAAKKNVEKKKADKEKAKDAKKTGTIKAKPTTAKAKSSATKPKTPKPKTTSAKPKKVVSATTPKKTAVKKPKAKTASATKK.

Polar residues predominate over residues 1–11 (MSDSAVATSAS). 2 disordered regions span residues 1–52 (MSDS…QQMV) and 104–250 (QTKG…ATKK). The H15 domain maps to 44 to 118 (SHPPTQQMVD…GASGSFKLSA (75 aa)). The span at 122–133 (KDAKPKASAVEK) shows a compositional bias: basic and acidic residues. The segment covering 140-161 (ASAARATKSKSSTSTTKKAAGA) has biased composition (low complexity). Residues 174–191 (KNVEKKKADKEKAKDAKK) are compositionally biased toward basic and acidic residues. The span at 192 to 234 (TGTIKAKPTTAKAKSSATKPKTPKPKTTSAKPKKVVSATTPKK) shows a compositional bias: low complexity. Basic residues predominate over residues 235 to 250 (TAVKKPKAKTASATKK).

It belongs to the histone H1/H5 family.

The protein resides in the nucleus. The protein localises to the chromosome. Functionally, histones H1 are necessary for the condensation of nucleosome chains into higher-order structures. This Drosophila virilis (Fruit fly) protein is Histone H1.1 (His1.1).